Here is a 115-residue protein sequence, read N- to C-terminus: Hydrogenase maturation factor HypA (115 aa).

H2 lines the Ni(2+) pocket. Positions 74, 77, 90, and 93 each coordinate Zn(2+).

This sequence belongs to the HypA/HybF family.

Functionally, involved in the maturation of [NiFe] hydrogenases. Required for nickel insertion into the metal center of the hydrogenase. This chain is Hydrogenase maturation factor HypA, found in Desulfosudis oleivorans (strain DSM 6200 / JCM 39069 / Hxd3) (Desulfococcus oleovorans).